Here is an 852-residue protein sequence, read N- to C-terminus: Taste receptor type 1 member 3 (852 aa).

An N-terminal signal peptide occupies residues 1–20; the sequence is MLGPAVLGLSLWALLHPGTG. Over 21–570 the chain is Extracellular; sequence APLCLSQQLR…FLAWGEPAVL (550 aa). 8 N-linked (GlcNAc...) asparagine glycosylation sites follow: Asn-85, Asn-130, Asn-264, Asn-285, Asn-380, Asn-411, Asn-432, and Asn-475. Residues 536-545 are required for brazzein responsiveness; that stretch reads IACTFCGQDE. The helical transmembrane segment at 571 to 591 threads the bilayer; sequence LLLLLLSLALGLVLAALGLFV. Over 592–603 the chain is Cytoplasmic; that stretch reads HHRDSPLVQASG. The chain crosses the membrane as a helical span at residues 604-624; that stretch reads GPLACFGLVCLGLVCLSVLLF. Topologically, residues 625–639 are extracellular; that stretch reads PGQPSPARCLAQQPL. A helical transmembrane segment spans residues 640-660; it reads SHLPLTGCLSTLFLQAAEIFV. The Cytoplasmic portion of the chain corresponds to 661-682; the sequence is ESELPLSWADRLSGCLRGPWAW. The chain crosses the membrane as a helical span at residues 683–703; sequence LVVLLAMLVEVALCTWYLVAF. Topologically, residues 704-729 are extracellular; that stretch reads PPEVVTDWHMLPTEALVHCRTRSWVS. A helical transmembrane segment spans residues 730 to 750; sequence FGLAHATNATLAFLCFLGTFL. Topologically, residues 751-762 are cytoplasmic; the sequence is VRSQPGCYNRAR. Residues 763–783 form a helical membrane-spanning segment; sequence GLTFAMLAYFITWVSFVPLLA. Residues 784–789 lie on the Extracellular side of the membrane; it reads NVQVVL. A helical membrane pass occupies residues 790–810; sequence RPAVQMGALLLCVLGILAAFH. Topologically, residues 811–852 are cytoplasmic; it reads LPRCYLLMRQPGLNTPEFFLGGGPGDAQGQNDGNTGNQGKHE.

This sequence belongs to the G-protein coupled receptor 3 family. TAS1R subfamily. In terms of assembly, forms homodimers or heterodimers with TAS1R1 and TAS1R2.

The protein resides in the cell membrane. Putative taste receptor. TAS1R1/TAS1R3 responds to the umami taste stimulus (the taste of monosodium glutamate). TAS1R2/TAS1R3 recognizes diverse natural and synthetic sweeteners. TAS1R3 is essential for the recognition and response to the disaccharide trehalose. Sequence differences within and between species can significantly influence the selectivity and specificity of taste responses. In Homo sapiens (Human), this protein is Taste receptor type 1 member 3 (TAS1R3).